The primary structure comprises 461 residues: D-phenylhydantoinase (461 aa).

A divalent metal cation contacts are provided by His59, His61, and Lys151. Lys151 carries the N6-carboxylysine modification. Tyr156 provides a ligand contact to substrate. The a divalent metal cation site is built by His182 and His239. Ser286 is a substrate binding site. Asp313 contributes to the a divalent metal cation binding site. Asn335 is a substrate binding site.

The protein belongs to the metallo-dependent hydrolases superfamily. Hydantoinase/dihydropyrimidinase family. Homotetramer. The cofactor is a divalent metal cation. Post-translationally, carboxylation allows a single lysine to coordinate two divalent metal cations.

It carries out the reaction D-5-phenylhydantoin + H2O = N-carbamoyl-D-phenylglycine + H(+). Functionally, catalyzes the stereospecific hydrolysis of the cyclic amide bond of D-hydantoin derivatives with an aromatic side chains at the 5'-position. Has no activity on dihydropyrimidines. The physiological function is unknown. The chain is D-phenylhydantoinase from Shigella boydii serotype 4 (strain Sb227).